Reading from the N-terminus, the 337-residue chain is Ribosomal RNA small subunit methyltransferase H (337 aa).

S-adenosyl-L-methionine contacts are provided by residues 33 to 35 (AGH), aspartate 53, aspartate 101, and glutamine 108.

This sequence belongs to the methyltransferase superfamily. RsmH family.

The protein localises to the cytoplasm. It carries out the reaction cytidine(1402) in 16S rRNA + S-adenosyl-L-methionine = N(4)-methylcytidine(1402) in 16S rRNA + S-adenosyl-L-homocysteine + H(+). Its function is as follows. Specifically methylates the N4 position of cytidine in position 1402 (C1402) of 16S rRNA. The sequence is that of Ribosomal RNA small subunit methyltransferase H from Herpetosiphon aurantiacus (strain ATCC 23779 / DSM 785 / 114-95).